Reading from the N-terminus, the 430-residue chain is Aspartate aminotransferase, mitochondrial (430 aa).

A mitochondrion-targeting transit peptide spans 1-29 (MALLHSSRILSGMAAAFHPGLAAAASARA). Position 48 is a phosphothreonine (Thr48). The residue at position 59 (Lys59) is an N6-acetyllysine. Position 65 (Gly65) interacts with substrate. Lys73 is subject to N6-acetyllysine; alternate. Lys73 bears the N6-succinyllysine; alternate mark. An N6-acetyllysine modification is found at Lys82. Residue Lys90 is modified to N6-acetyllysine; alternate. Position 90 is an N6-succinyllysine; alternate (Lys90). 3'-nitrotyrosine; alternate is present on Tyr96. Tyr96 is subject to Phosphotyrosine; alternate. Lys107 and Lys122 each carry N6-acetyllysine; alternate. Residues Lys107 and Lys122 each carry the N6-succinyllysine; alternate modification. Ser143 carries the post-translational modification Phosphoserine. An N6-acetyllysine; alternate modification is found at Lys159. Lys159 carries the N6-succinyllysine; alternate modification. Trp162 contacts substrate. An N6-acetyllysine; alternate modification is found at Lys185. Lys185 is modified (N6-succinyllysine; alternate). Residue Asn215 coordinates substrate. Position 227 is an N6-succinyllysine (Lys227). At Lys234 the chain carries N6-acetyllysine. 2 positions are modified to N6-acetyllysine; alternate: Lys279 and Lys296. At Lys279 the chain carries N6-(pyridoxal phosphate)lysine; alternate. An N6-succinyllysine; alternate modification is found at Lys296. Residue Lys302 is modified to N6-acetyllysine. N6-acetyllysine; alternate is present on Lys309. Lys309 is modified (N6-succinyllysine; alternate). Asymmetric dimethylarginine is present on Arg313. An N6-acetyllysine; alternate modification is found at Lys338. Position 338 is an N6-succinyllysine; alternate (Lys338). Position 345 is an N6-acetyllysine (Lys345). An N6-acetyllysine; alternate modification is found at Lys363. Residue Lys363 is modified to N6-succinyllysine; alternate. An N6-acetyllysine mark is found at Lys364 and Lys387. 2 positions are modified to N6-acetyllysine; alternate: Lys396 and Lys404. Residues Lys396 and Lys404 each carry the N6-succinyllysine; alternate modification. Residue Arg407 coordinates substrate.

Belongs to the class-I pyridoxal-phosphate-dependent aminotransferase family. As to quaternary structure, homodimer. It depends on pyridoxal 5'-phosphate as a cofactor. Post-translationally, acetylation of Lys-296, Lys-345 and Lys-363 is observed in liver mitochondria from fasted mice but not from fed mice. In terms of tissue distribution, detected in brain (at protein level).

The protein resides in the mitochondrion matrix. Its subcellular location is the cell membrane. The enzyme catalyses L-aspartate + 2-oxoglutarate = oxaloacetate + L-glutamate. The catalysed reaction is L-kynurenine + 2-oxoglutarate = kynurenate + L-glutamate + H2O. Functionally, catalyzes the irreversible transamination of the L-tryptophan metabolite L-kynurenine to form kynurenic acid (KA). As a member of the malate-aspartate shuttle, it has a key role in the intracellular NAD(H) redox balance. Is important for metabolite exchange between mitochondria and cytosol, and for amino acid metabolism. Facilitates cellular uptake of long-chain free fatty acids. The sequence is that of Aspartate aminotransferase, mitochondrial (Got2) from Mus musculus (Mouse).